Reading from the N-terminus, the 520-residue chain is DnaJ homolog l(2)tid, mitochondrial (520 aa).

A mitochondrion-targeting transit peptide spans 1–62; the sequence is MMISCKKLFV…RRLHTTRDLL (62 aa). Arg-30 is subject to Omega-N-methylarginine. In terms of domain architecture, J spans 65 to 130; that stretch reads DYYATLGVAK…QKRREYDTYG (66 aa). Lys-106 is modified (N6-acetyllysine). Residues 214–292 form a CR-type zinc finger; that stretch reads GVNKDVNVNV…CEGKGRTVQR (79 aa). 8 residues coordinate Zn(2+): Cys-227, Cys-230, Cys-244, Cys-247, Cys-266, Cys-269, Cys-280, and Cys-283. The CXXCXGXG motif; approximate repeat unit spans residues 227-234; the sequence is CPKCAGTK. The stretch at 244 to 251 is one CXXCXGXG motif repeat; sequence CQYCNGTG. The CXXCXGXG motif; approximate repeat unit spans residues 266 to 273; it reads CRYCQGTR. A CXXCXGXG motif repeat occupies 280–287; the sequence is CSECEGKG. The interval 430 to 520 is disordered; it reads QIHGIANRKD…FISKIKSMFN (91 aa). Residues 446 to 476 are compositionally biased toward low complexity; sequence AGASEEPGAGAAAKASAAAAGSGASKPGPGA. The segment covering 479-495 has biased composition (basic and acidic residues); that stretch reads SEGKDQWTDNKKTKAKE. The span at 496 to 511 shows a compositional bias: gly residues; that stretch reads GGGSGSGQGDGGGGGF.

As to quaternary structure, interacts with ptc (via C-terminal cytoplasmic region); the interaction is probably direct. Interacts with hh/hedgehog; the interaction is probably mediated by the hedgehog receptor ptc. In terms of processing, appears to produce proteins of differing size. Predicted to have a molecular mass of 56 kDa (TID56) however proteins of 50 kDa, 47 kDa and 40 kDa have been identified and named TID50, TID47 and TID40. TID50 and TID40 localize to the mitochondria while TID47 localizes to the cytoplasm. TID50 is probably TID56 that has undergone mitochondrial transit peptide processing. TID40 and TID47 may be alternately processed proteins or may be isoforms resulting from alternative splicing. As to expression, ubiquitously expressed throughout embryonic development. In larvae, expression is seen in sensory organs, gopplet cells, gonads, imaginal disks, proventriculus, fat body, hematopoietic organ, midgut, Malpighian tubules and ring gland.

Its subcellular location is the cytoplasm. It is found in the cytosol. The protein resides in the mitochondrion. It localises to the mitochondrion outer membrane. In terms of biological role, involved in hh/hedgehog signaling. May act as a tumor suppressor in larval imaginal disks. This is DnaJ homolog l(2)tid, mitochondrial from Drosophila melanogaster (Fruit fly).